Here is a 141-residue protein sequence, read N- to C-terminus: Putative pre-16S rRNA nuclease (141 aa).

Belongs to the YqgF nuclease family.

The protein resides in the cytoplasm. In terms of biological role, could be a nuclease involved in processing of the 5'-end of pre-16S rRNA. The protein is Putative pre-16S rRNA nuclease of Roseiflexus sp. (strain RS-1).